Reading from the N-terminus, the 320-residue chain is Ferrochelatase (320 aa).

Positions 194 and 275 each coordinate Fe cation.

It belongs to the ferrochelatase family.

The protein localises to the cytoplasm. It carries out the reaction heme b + 2 H(+) = protoporphyrin IX + Fe(2+). It functions in the pathway porphyrin-containing compound metabolism; protoheme biosynthesis; protoheme from protoporphyrin-IX: step 1/1. In terms of biological role, catalyzes the ferrous insertion into protoporphyrin IX. In Pectobacterium atrosepticum (strain SCRI 1043 / ATCC BAA-672) (Erwinia carotovora subsp. atroseptica), this protein is Ferrochelatase.